The sequence spans 264 residues: uncharacterized protein (264 aa).

Residues 7-27 traverse the membrane as a helical segment; it reads LTLGICLVLLIILIVGYVIMT.

The protein belongs to the staphylococcal tandem lipoprotein family.

It localises to the cell membrane. This is an uncharacterized protein from Staphylococcus aureus (strain NCTC 8325 / PS 47).